A 224-amino-acid polypeptide reads, in one-letter code: Urease accessory protein UreF (224 aa).

The protein belongs to the UreF family. In terms of assembly, ureD, UreF and UreG form a complex that acts as a GTP-hydrolysis-dependent molecular chaperone, activating the urease apoprotein by helping to assemble the nickel containing metallocenter of UreC. The UreE protein probably delivers the nickel.

It is found in the cytoplasm. In terms of biological role, required for maturation of urease via the functional incorporation of the urease nickel metallocenter. This is Urease accessory protein UreF from Pseudomonas putida (strain W619).